A 310-amino-acid polypeptide reads, in one-letter code: Homoserine kinase (310 aa).

Proline 91–cysteine 101 provides a ligand contact to ATP.

It belongs to the GHMP kinase family. Homoserine kinase subfamily.

It localises to the cytoplasm. The enzyme catalyses L-homoserine + ATP = O-phospho-L-homoserine + ADP + H(+). It functions in the pathway amino-acid biosynthesis; L-threonine biosynthesis; L-threonine from L-aspartate: step 4/5. Functionally, catalyzes the ATP-dependent phosphorylation of L-homoserine to L-homoserine phosphate. In Shigella flexneri serotype 5b (strain 8401), this protein is Homoserine kinase.